Reading from the N-terminus, the 84-residue chain is Three-finger toxin MALT0070C (84 aa).

Positions 1-21 (MKTLLLTLVVVTIVCLDLGYT) are cleaved as a signal peptide. 4 cysteine pairs are disulfide-bonded: C24–C43, C36–C60, C64–C71, and C72–C77.

This sequence belongs to the three-finger toxin family. Short-chain subfamily. In terms of tissue distribution, expressed by the venom gland.

It is found in the secreted. The sequence is that of Three-finger toxin MALT0070C from Micrurus altirostris (Uruguayan coral snake).